Consider the following 106-residue polypeptide: MALQSLRGSMRSVVGKRICPLIEYAIFPPLPRIIVYASRRARMQRGNYSLIKKPKKVSTLRQYQSTKSPMYQSLQRICGVREWLNKYCMWKEVDEKDFGFEIGAFD.

The CoA carboxyltransferase N-terminal domain occupies 1–106 (MALQSLRGSM…DFGFEIGAFD (106 aa)).

The protein belongs to the AccD/PCCB family.

Its subcellular location is the plastid. The protein resides in the chloroplast stroma. The protein is Putative acetyl-coenzyme A carboxylase carboxyl transferase subunit beta-like protein (accD) of Oryza sativa (Rice).